The sequence spans 282 residues: Aldo-keto reductase ML1669 (282 aa).

Tyr57 acts as the Proton donor in catalysis. Leu197, Val235, Arg237, Ser238, Ala239, Ser246, Asn247, and Arg273 together coordinate NADPH.

Belongs to the aldo/keto reductase family.

This is Aldo-keto reductase ML1669 from Mycobacterium leprae (strain TN).